Here is a 358-residue protein sequence, read N- to C-terminus: Gentisate 1,2-dioxygenase (358 aa).

The 120-residue stretch at 239–358 folds into the Cupin type-1 domain; the sequence is QTLRQRAEND…AFNFYAEAEP (120 aa).

Belongs to the gentisate 1,2-dioxygenase family. As to quaternary structure, homotetramer.

It catalyses the reaction 2,5-dihydroxybenzoate + O2 = 3-maleylpyruvate + H(+). It participates in aromatic compound metabolism; naphthalene degradation. With respect to regulation, inhibited by 2,2'-dipyridyl. Its function is as follows. Catalyzes the oxygen-dependent ring fission of gentisate between the carboxyl and proximal hydroxyl groups at positions 1 and 2 of the aromatic ring to form maleylpyruvate. No activity with cathechol and protecatechuate as substrates. Part of a 3-hydroxybenzoic acid-degradation pathway. The polypeptide is Gentisate 1,2-dioxygenase (gdoA) (Haloferax sp).